Here is a 234-residue protein sequence, read N- to C-terminus: BTB/POZ domain-containing protein KCTD5 (234 aa).

The residue at position 2 (Ala2) is an N-acetylalanine. The 103-residue stretch at 44-146 (KWVRLNVGGT…LVKDKIRERD (103 aa)) folds into the BTB domain. The disordered stretch occupies residues 213 to 234 (PYGTTSEPSEKAKILQERGSRM). Residues 220-234 (PSEKAKILQERGSRM) show a composition bias toward basic and acidic residues.

In terms of assembly, homopentamer. Interacts (via C-terminus) with GRASP55/GORASP2. Interacts with CUL3 and with ubiquitinated proteins. Interacts with CRY1.

It localises to the cytoplasm. The protein localises to the cytosol. Its subcellular location is the nucleus. Its function is as follows. Its interaction with CUL3 suggests that it may act as a substrate adapter in some E3 ligase complex. Does not affect the function of Kv channel Kv2.1/KCNB1, Kv1.2/KCNA2, Kv4.2/KCND2 and Kv3.4/KCNC4. In Rattus norvegicus (Rat), this protein is BTB/POZ domain-containing protein KCTD5 (Kctd5).